Consider the following 432-residue polypeptide: Adenosylhomocysteinase (432 aa).

S2 bears the N-acetylserine mark. Positions 57, 131, and 156 each coordinate substrate. Residue S183 is modified to Phosphoserine. Residues 183–350 (SVTKSKFDNL…EGRLVNLGCA (168 aa)) are NAD binding. Residues K186 and D190 each contribute to the substrate site. K186 carries the N6-(2-hydroxyisobutyryl)lysine modification. At Y193 the chain carries Phosphotyrosine.

This sequence belongs to the adenosylhomocysteinase family. Homotetramer. Interaction with AHCYL1. It depends on NAD(+) as a cofactor.

It is found in the cytoplasm. The protein resides in the melanosome. Its subcellular location is the nucleus. The protein localises to the endoplasmic reticulum. It catalyses the reaction S-adenosyl-L-homocysteine + H2O = L-homocysteine + adenosine. It participates in amino-acid biosynthesis; L-homocysteine biosynthesis; L-homocysteine from S-adenosyl-L-homocysteine: step 1/1. In terms of biological role, catalyzes the hydrolysis of S-adenosyl-L-homocysteine to form adenosine and homocysteine. Binds copper ions. This Macaca fascicularis (Crab-eating macaque) protein is Adenosylhomocysteinase (AHCY).